Reading from the N-terminus, the 119-residue chain is Large ribosomal subunit protein bL20 (119 aa).

It belongs to the bacterial ribosomal protein bL20 family.

Its function is as follows. Binds directly to 23S ribosomal RNA and is necessary for the in vitro assembly process of the 50S ribosomal subunit. It is not involved in the protein synthesizing functions of that subunit. This chain is Large ribosomal subunit protein bL20, found in Xanthomonas oryzae pv. oryzae (strain PXO99A).